A 109-amino-acid polypeptide reads, in one-letter code: MNSLCRSKQAPFEYTLSLIGGKWKMRILYELGCEKTMRYGELKRAMPFITHKMLSAQLKELQTDGLIHRSEVSHTPLKVEYSLSDRGRSLYPLIDEMCKWGMAQGGPHM.

Residues 10–109 form the HTH hxlR-type domain; that stretch reads APFEYTLSLI…WGMAQGGPHM (100 aa).

This is an uncharacterized protein from Bacillus subtilis (strain 168).